The primary structure comprises 684 residues: DNA ligase (684 aa).

Residues 34 to 38 (DFQYD), 83 to 84 (SL), and Glu-117 each bind NAD(+). Lys-119 serves as the catalytic N6-AMP-lysine intermediate. Arg-140, Glu-186, Lys-300, and Lys-324 together coordinate NAD(+). Zn(2+)-binding residues include Cys-418, Cys-421, Cys-436, and Cys-442. The BRCT domain maps to 601–684 (PVNLNFDGMK…EMLGEVGSNE (84 aa)).

The protein belongs to the NAD-dependent DNA ligase family. LigA subfamily. Mg(2+) serves as cofactor. The cofactor is Mn(2+).

It carries out the reaction NAD(+) + (deoxyribonucleotide)n-3'-hydroxyl + 5'-phospho-(deoxyribonucleotide)m = (deoxyribonucleotide)n+m + AMP + beta-nicotinamide D-nucleotide.. Functionally, DNA ligase that catalyzes the formation of phosphodiester linkages between 5'-phosphoryl and 3'-hydroxyl groups in double-stranded DNA using NAD as a coenzyme and as the energy source for the reaction. It is essential for DNA replication and repair of damaged DNA. In Chlorobium phaeobacteroides (strain BS1), this protein is DNA ligase.